The following is a 701-amino-acid chain: CRS2-associated factor 1, chloroplastic (701 aa).

The N-terminal 77 residues, 1-77, are a transit peptide targeting the chloroplast; sequence MATSHLTSRS…ENGEPAAGVR (77 aa). CRM domains follow at residues 183–279 and 301–397; these read EPLT…TRPI and DGLT…LPPL. The segment at 581 to 603 is CRS2 binding; it reads GILLLFKQAIDSGMALVLNENEF.

Interacts with CRS2 and RNA. Part of large ribonucleo-protein complexes that include group IIB introns, CRS2 and CAF1.

The protein localises to the plastid. It localises to the chloroplast stroma. In terms of biological role, required for the splicing of group IIB introns in chloroplasts. Forms splicing particles with CRS2. Interacts with RNA and confers intron specificity of the splicing particles. The chain is CRS2-associated factor 1, chloroplastic from Oryza sativa subsp. japonica (Rice).